A 495-amino-acid polypeptide reads, in one-letter code: Putative lon protease homolog (495 aa).

Gly-52–Ser-59 serves as a coordination point for ATP. A disordered region spans residues Tyr-471 to Glu-495. Residues Ser-472–Tyr-486 show a composition bias toward polar residues.

It belongs to the peptidase S16 family.

The protein is Putative lon protease homolog of Thermoplasma volcanium (strain ATCC 51530 / DSM 4299 / JCM 9571 / NBRC 15438 / GSS1).